Consider the following 734-residue polypeptide: Photosystem I P700 chlorophyll a apoprotein A2 (734 aa).

8 helical membrane passes run 46–69 (IFAS…FHVA), 135–158 (LYTG…LHLQ), 175–199 (LNHH…HVAI), 273–291 (MAHH…GHMY), 330–353 (LHFQ…QHMY), 369–395 (SALY…IFFI), 417–439 (ALIS…LYVH), and 517–535 (FLVH…LILV). Residues C559 and C568 each contribute to the [4Fe-4S] cluster site. 2 helical membrane-spanning segments follow: residues 575 to 596 (AFYL…YWHW) and 643 to 665 (LSVW…MFLI). Residues H654, M662, and Y670 each contribute to the chlorophyll a site. Residue W671 participates in phylloquinone binding. A helical transmembrane segment spans residues 707 to 727 (LVGLAHFSVGYVFTYAAFVIA).

The protein belongs to the PsaA/PsaB family. The PsaA/B heterodimer binds the P700 chlorophyll special pair and subsequent electron acceptors. PSI consists of a core antenna complex that captures photons, and an electron transfer chain that converts photonic excitation into a charge separation. The eukaryotic PSI reaction center is composed of at least 11 subunits. P700 is a chlorophyll a/chlorophyll a' dimer, A0 is one or more chlorophyll a, A1 is one or both phylloquinones and FX is a shared 4Fe-4S iron-sulfur center. serves as cofactor.

It is found in the plastid. Its subcellular location is the chloroplast thylakoid membrane. The enzyme catalyses reduced [plastocyanin] + hnu + oxidized [2Fe-2S]-[ferredoxin] = oxidized [plastocyanin] + reduced [2Fe-2S]-[ferredoxin]. Its function is as follows. PsaA and PsaB bind P700, the primary electron donor of photosystem I (PSI), as well as the electron acceptors A0, A1 and FX. PSI is a plastocyanin/cytochrome c6-ferredoxin oxidoreductase, converting photonic excitation into a charge separation, which transfers an electron from the donor P700 chlorophyll pair to the spectroscopically characterized acceptors A0, A1, FX, FA and FB in turn. Oxidized P700 is reduced on the lumenal side of the thylakoid membrane by plastocyanin or cytochrome c6. The sequence is that of Photosystem I P700 chlorophyll a apoprotein A2 from Nephroselmis olivacea (Green alga).